The following is a 1710-amino-acid chain: Phosphatidylinositol 4-phosphate 5-kinase (1710 aa).

One can recognise an EF-hand domain in the interval 68-98 (YKSIFKAFDLNNDNYLDFYEFCVAINIMLKG). The Ca(2+) site is built by aspartate 76, asparagine 78, aspartate 80, tyrosine 82, and glutamate 87. Disordered stretches follow at residues 139–255 (NNMN…DPIN), 427–479 (KQKK…IKSV), and 895–993 (GEGH…HNNN). Low complexity predominate over residues 140 to 235 (NMNGDNINGD…HNNNSHNNNN (96 aa)). Residues 236–248 (KAENSLGQPLNEK) show a composition bias toward polar residues. A compositionally biased stretch (basic residues) spans 427–444 (KQKKKKKKKKKKKKKKEK). Residues 456 to 468 (SSSMENKSQNKSQ) are compositionally biased toward low complexity. Residues 902-973 (EEEEKNDDEE…DDNDDNDDND (72 aa)) show a composition bias toward acidic residues. The span at 974 to 987 (EKSNIKIENKKDVP) shows a compositional bias: basic and acidic residues. Residues 1334–1709 (QKKTFHRILA…RFVTFIENHM (376 aa)) form the PIPK domain.

It catalyses the reaction a 1,2-diacyl-sn-glycero-3-phospho-(1D-myo-inositol 4-phosphate) + ATP = a 1,2-diacyl-sn-glycero-3-phospho-(1D-myo-inositol-4,5-bisphosphate) + ADP + H(+). Its activity is regulated as follows. Catalytic activity is increase by myristoylated ARF1. Phosphatidic acid has no effect on catalytic activity. Functionally, catalyzes the phosphorylation of phosphatidylinositol 4-phosphate (PtdIns(4)P/PI4P) to form phosphatidylinositol 4,5-bisphosphate (PtdIns(4,5)P2/PIP2), a lipid second messenger that regulates several cellular processes. The protein is Phosphatidylinositol 4-phosphate 5-kinase of Plasmodium falciparum (isolate 3D7).